Here is a 173-residue protein sequence, read N- to C-terminus: MAARSAALKIDWVKVTSSLGLRGQTAASLQAFKKRNDDARRKVQILSEQPQTVDFAHYRQILKNQAVVDEIENQFKNFKPATYDVSRQLKAIEAFEAQAVQNAEQTKGKVEAELRNLQKTLENIETARPFDELTVDEVAAAQPEIDEKTASLVSKGRWMPAGYKERFGDMSVV.

A mitochondrion-targeting transit peptide spans 1–23; that stretch reads MAARSAALKIDWVKVTSSLGLRG.

The protein belongs to the ATPase d subunit family. As to quaternary structure, F-type ATPases have 2 components, CF(1) - the catalytic core - and CF(0) - the membrane proton channel. In yeast, the dimeric form of ATP synthase consists of 17 polypeptides: alpha, beta, gamma, delta, epsilon, 4 (B), 5 (OSCP), 6 (A), 8, 9 (C), d, E (Tim11), f, g, h, i/j and k.

It is found in the mitochondrion inner membrane. Mitochondrial membrane ATP synthase (F(1)F(0) ATP synthase or Complex V) produces ATP from ADP in the presence of a proton gradient across the membrane which is generated by electron transport complexes of the respiratory chain. F-type ATPases consist of two structural domains, F(1) - containing the extramembraneous catalytic core, and F(0) - containing the membrane proton channel, linked together by a central stalk and a peripheral stalk. During catalysis, ATP synthesis in the catalytic domain of F(1) is coupled via a rotary mechanism of the central stalk subunits to proton translocation. Part of the complex F(0) domain and the peripheric stalk, which acts as a stator to hold the catalytic alpha(3)beta(3) subcomplex and subunit a/ATP6 static relative to the rotary elements. The chain is ATP synthase subunit d, mitochondrial (atp7) from Aspergillus terreus (strain NIH 2624 / FGSC A1156).